The sequence spans 863 residues: DNA mismatch repair protein MutS (863 aa).

Residue 607–614 (GPNMAGKS) participates in ATP binding.

The protein belongs to the DNA mismatch repair MutS family.

This protein is involved in the repair of mismatches in DNA. It is possible that it carries out the mismatch recognition step. This protein has a weak ATPase activity. The polypeptide is DNA mismatch repair protein MutS (Caldicellulosiruptor bescii (strain ATCC BAA-1888 / DSM 6725 / KCTC 15123 / Z-1320) (Anaerocellum thermophilum)).